We begin with the raw amino-acid sequence, 530 residues long: Cytochrome P450 2U1 (530 aa).

The next 4 helical transmembrane spans lie at 21–41 (LQAV…DWVW), 99–119 (VYGN…LSDF), 247–267 (ICLH…YLPF), and 328–348 (LFYI…NSLL). Position 476 (cysteine 476) interacts with heme. Residues 481–501 (LAKMELFLMFVSLMQSFTFAL) traverse the membrane as a helical segment.

Belongs to the cytochrome P450 family. It depends on heme as a cofactor. In terms of tissue distribution, specifically expressed in thymus and brain. In brain, expressed in cortex, cerebellum, olfactory bulbs, pons and medulla and the limbic structures (at protein level).

It is found in the endoplasmic reticulum membrane. Its subcellular location is the microsome membrane. It localises to the mitochondrion inner membrane. It catalyses the reaction an omega-methyl-long-chain fatty acid + reduced [NADPH--hemoprotein reductase] + O2 = an omega-hydroxy-long-chain fatty acid + oxidized [NADPH--hemoprotein reductase] + H2O + H(+). The catalysed reaction is (5Z,8Z,11Z,14Z)-eicosatetraenoate + reduced [NADPH--hemoprotein reductase] + O2 = 19-hydroxy-(5Z,8Z,11Z,14Z)-eicosatetraenoate + oxidized [NADPH--hemoprotein reductase] + H2O + H(+). The enzyme catalyses (5Z,8Z,11Z,14Z)-eicosatetraenoate + reduced [NADPH--hemoprotein reductase] + O2 = 20-hydroxy-(5Z,8Z,11Z,14Z)-eicosatetraenoate + oxidized [NADPH--hemoprotein reductase] + H2O + H(+). It carries out the reaction N-[(5Z,8Z,11Z,14Z)-eicosatetraenoyl]-serotonin + reduced [NADPH--hemoprotein reductase] + O2 = 2-oxo-N-[(5Z,8Z,11Z,14Z)-eicosatetraenoyl]-serotonin + oxidized [NADPH--hemoprotein reductase] + H2O + H(+). A cytochrome P450 monooxygenase involved in the metabolism of arachidonic acid and its conjugates. Mechanistically, uses molecular oxygen inserting one oxygen atom into a substrate, and reducing the second into a water molecule, with two electrons provided by NADPH via cytochrome P450 reductase (CPR; NADPH-ferrihemoprotein reductase). Acts as an omega and omega-1 hydroxylase for arachidonic acid and possibly for other long chain fatty acids. May modulate the arachidonic acid signaling pathway and play a role in other fatty acid signaling processes. May down-regulate the biological activities of N-arachidonoyl-serotonin, an endocannabinoid that has anti-nociceptive effects through inhibition of fatty acid amide hydrolase FAAH, TRPV1 receptor and T-type calcium channels. Catalyzes C-2 oxidation of the indole ring of N-arachidonoyl-serotonin forming a less active product 2-oxo-N-arachidonoyl-serotonin. In Rattus norvegicus (Rat), this protein is Cytochrome P450 2U1 (Cyp2u1).